The sequence spans 290 residues: Glycine--tRNA ligase alpha subunit (290 aa).

It belongs to the class-II aminoacyl-tRNA synthetase family. Tetramer of two alpha and two beta subunits.

Its subcellular location is the cytoplasm. It carries out the reaction tRNA(Gly) + glycine + ATP = glycyl-tRNA(Gly) + AMP + diphosphate. The chain is Glycine--tRNA ligase alpha subunit from Prochlorococcus marinus (strain NATL2A).